An 85-amino-acid polypeptide reads, in one-letter code: Large ribosomal subunit protein bL27 (85 aa).

The segment at 1 to 21 (MAHKKAGGSTRNGRDSESKRL) is disordered.

This sequence belongs to the bacterial ribosomal protein bL27 family.

This Ectopseudomonas mendocina (strain ymp) (Pseudomonas mendocina) protein is Large ribosomal subunit protein bL27.